Consider the following 500-residue polypeptide: Arabinofuranosidase/B-xylosidase (500 aa).

Residues 1-21 form the signal peptide; the sequence is MLSNARIIAAGCIAAGSLVAA. An N-linked (GlcNAc...) asparagine glycan is attached at Asn467.

This sequence belongs to the glycosyl hydrolase 54 family.

The enzyme catalyses Hydrolysis of terminal non-reducing alpha-L-arabinofuranoside residues in alpha-L-arabinosides.. It catalyses the reaction Hydrolysis of (1-&gt;4)-beta-D-xylans, to remove successive D-xylose residues from the non-reducing termini.. The chain is Arabinofuranosidase/B-xylosidase (xyl1) from Trichoderma koningii (Hypocrea koningii).